Consider the following 485-residue polypeptide: Membrane-bound lytic murein transglycosylase F (485 aa).

Residues 1-29 (MFAHTALRQRCAKWLLATGLFLLLGACVE) form the signal peptide. Positions 30–267 (KPSTLERVKE…RLKDRYYGHV (238 aa)) are non-LT domain. The LT domain stretch occupies residues 268–485 (DVLGYVGAYT…DKPADKSSPM (218 aa)). Glu314 is a catalytic residue. A disordered region spans residues 465–485 (EGNLHVPGVNKDKPADKSSPM). Positions 474–485 (NKDKPADKSSPM) are enriched in basic and acidic residues.

This sequence in the N-terminal section; belongs to the bacterial solute-binding protein 3 family. The protein in the C-terminal section; belongs to the transglycosylase Slt family.

It is found in the cell outer membrane. The enzyme catalyses Exolytic cleavage of the (1-&gt;4)-beta-glycosidic linkage between N-acetylmuramic acid (MurNAc) and N-acetylglucosamine (GlcNAc) residues in peptidoglycan, from either the reducing or the non-reducing ends of the peptidoglycan chains, with concomitant formation of a 1,6-anhydrobond in the MurNAc residue.. In terms of biological role, murein-degrading enzyme that degrades murein glycan strands and insoluble, high-molecular weight murein sacculi, with the concomitant formation of a 1,6-anhydromuramoyl product. Lytic transglycosylases (LTs) play an integral role in the metabolism of the peptidoglycan (PG) sacculus. Their lytic action creates space within the PG sacculus to allow for its expansion as well as for the insertion of various structures such as secretion systems and flagella. The protein is Membrane-bound lytic murein transglycosylase F of Pseudomonas putida (strain ATCC 700007 / DSM 6899 / JCM 31910 / BCRC 17059 / LMG 24140 / F1).